Reading from the N-terminus, the 443-residue chain is Large ribosomal subunit protein mL50 (443 aa).

The tract at residues 121–145 (QPTRADAPEKIRDPNYEPATSGAGL) is disordered. The segment covering 126–135 (DAPEKIRDPN) has biased composition (basic and acidic residues).

It belongs to the mitochondrion-specific ribosomal protein mL50 family. As to quaternary structure, component of the mitochondrial large ribosomal subunit (mt-LSU). Mature N.crassa 74S mitochondrial ribosomes consist of a small (37S) and a large (54S) subunit. The 37S small subunit contains a 16S ribosomal RNA (16S mt-rRNA) and 32 different proteins. The 54S large subunit contains a 23S rRNA (23S mt-rRNA) and 42 different proteins.

It localises to the mitochondrion. In terms of biological role, component of the mitochondrial ribosome (mitoribosome), a dedicated translation machinery responsible for the synthesis of mitochondrial genome-encoded proteins, including at least some of the essential transmembrane subunits of the mitochondrial respiratory chain. The mitoribosomes are attached to the mitochondrial inner membrane and translation products are cotranslationally integrated into the membrane. This chain is Large ribosomal subunit protein mL50 (mrpl13), found in Neurospora crassa (strain ATCC 24698 / 74-OR23-1A / CBS 708.71 / DSM 1257 / FGSC 987).